Consider the following 283-residue polypeptide: Probable endonuclease 4 (283 aa).

Zn(2+)-binding residues include His-69, His-113, Glu-148, Asp-182, His-185, His-217, Asp-230, His-232, and Glu-262.

The protein belongs to the AP endonuclease 2 family. Zn(2+) is required as a cofactor.

The enzyme catalyses Endonucleolytic cleavage to 5'-phosphooligonucleotide end-products.. Its function is as follows. Endonuclease IV plays a role in DNA repair. It cleaves phosphodiester bonds at apurinic or apyrimidinic (AP) sites, generating a 3'-hydroxyl group and a 5'-terminal sugar phosphate. The polypeptide is Probable endonuclease 4 (Bifidobacterium longum (strain NCC 2705)).